The chain runs to 1256 residues: Muramidase-released protein (1256 aa).

A signal peptide spans 1 to 47 (MRRSNKKSFDWYGTKQQFSIRKYHFGAASVLLGVSLVLGAGAQVVKA). Small repeat units lie at residues 663–681 (KTTG…VYEK) and 839–861 (KTDG…VYQK). Disordered stretches follow at residues 873–949 (PETD…VDTP), 967–994 (GNPI…KTVT), and 1028–1049 (KEPV…TDNK). Residues 953–1006 (VPVKKVVTNHVDEEGNPIAPQEEGTKPNKSIPGYEFTGKTVTDEDGNTTHIYKK) form a Large repeat. Positions 1033 to 1045 (DTPTSPEGTPYDT) are enriched in polar residues. One copy of the Small repeat lies at 1064–1084 (RVDGTENGKVVEGETVVTYVY). Large repeat units follow at residues 1089-1142 (TPAK…IYKK) and 1143-1195 (TPAK…IYRK). Residues 1102 to 1137 (EGNPVAPQEEGTKPNKSIPGYEFTGKTVTDEDGNTT) are disordered. The disordered stretch occupies residues 1196–1229 (LSNKPTTPEKETPAKPQAGKTASGKAQLPNTGEA). Positions 1223-1227 (LPNTG) match the LPXTG sorting signal motif. Threonine 1226 is modified (pentaglycyl murein peptidoglycan amidated threonine). Residues 1227 to 1256 (GEASSVAGALGTAMLVATLAFARKRRRNED) constitute a propeptide, removed by sortase.

The protein resides in the secreted. The protein localises to the cell wall. This Streptococcus suis protein is Muramidase-released protein (mrp).